Reading from the N-terminus, the 40-residue chain is Photosystem II reaction center protein J (40 aa).

The helical transmembrane segment at 8-28 threads the bilayer; sequence IPLWLVGTVAGILVIGLIGIF.

Belongs to the PsbJ family. PSII is composed of 1 copy each of membrane proteins PsbA, PsbB, PsbC, PsbD, PsbE, PsbF, PsbH, PsbI, PsbJ, PsbK, PsbL, PsbM, PsbT, PsbX, PsbY, PsbZ, Psb30/Ycf12, at least 3 peripheral proteins of the oxygen-evolving complex and a large number of cofactors. It forms dimeric complexes.

Its subcellular location is the plastid. It is found in the chloroplast thylakoid membrane. Its function is as follows. One of the components of the core complex of photosystem II (PSII). PSII is a light-driven water:plastoquinone oxidoreductase that uses light energy to abstract electrons from H(2)O, generating O(2) and a proton gradient subsequently used for ATP formation. It consists of a core antenna complex that captures photons, and an electron transfer chain that converts photonic excitation into a charge separation. This chain is Photosystem II reaction center protein J, found in Gnetum parvifolium (Small-leaved jointfir).